We begin with the raw amino-acid sequence, 690 residues long: Quinohemoprotein alcohol dehydrogenase ADH IIB (690 aa).

Residues 1–22 (MKKPLRTSLLMLCLATPLAALA) form the signal peptide. Position 81 (Glu81) interacts with pyrroloquinoline quinone. Cys127 and Cys128 form a disulfide bridge. Pyrroloquinoline quinone contacts are provided by residues Arg133, Thr177, and 193–194 (GA). Glu195 is a Ca(2+) binding site. Thr252 contacts pyrroloquinoline quinone. Residues Asn272 and Asp317 each contribute to the Ca(2+) site. Asp317 serves as the catalytic Proton acceptor. Residues Lys344, 404-405 (NW), and Val547 each bind pyrroloquinoline quinone. One can recognise a Cytochrome c domain in the interval 600–678 (EQVQAGKQLY…QIKLYVMSRE (79 aa)). Residues Cys613, Cys616, His617, and Met655 each contribute to the heme c site.

Belongs to the bacterial PQQ dehydrogenase family. As to quaternary structure, monomer. Pyrroloquinoline quinone serves as cofactor. The cofactor is Ca(2+). It depends on heme c as a cofactor.

Its subcellular location is the periplasm. The enzyme catalyses 2 oxidized [azurin] + a primary alcohol = 2 reduced [azurin] + an aldehyde + 2 H(+). Inhibited by 10 mM 1-butanol. Catalyzes the dye-linked oxidation of primary alcohols to the corresponding aldehydes and the (subsequent) oxidation of the aldehydes to carboxylic acids. Exhibits activity with longer mono-alcohols (C-4 to C-7) but not with methanol or glycerol. Reacts with 1,2-propanediol and 1,3-propanediol but not with sugar alcohols such as D-sorbitol. This is Quinohemoprotein alcohol dehydrogenase ADH IIB from Pseudomonas putida (Arthrobacter siderocapsulatus).